We begin with the raw amino-acid sequence, 440 residues long: MDEEYDVIVLGTGLTECVLSGLLSVDGKKVLHIDRNDYYGADSASLNLTQLYALFRPGEQRPESLGRDRDWCVDLVPKFLMANGDLTNILIYTDVTRYIEFKQIAGSYVYRDGRIAKVPGNEMEALKSPLMSLFEKRRAKKFLEWVNNYREDDPSTYKDINIDRDSMESVFKKFGLQSGTQDFIGHAMALYLDDAYLKKPARETRERILLYASSIAKFGKSPYIYPLYGLGELPQGFARLSAIYGGTYMLNQPVDEIVYGDDGVAIGVRSGDQVAKAKQIIGDPSYFREKVRSVGRLVRAICILNHPIPNTDNLDSVQIIIPQNQVKRKHDIYIAGISSVHNVCPKGYYLAIISTIVETANPLSEIAPGLKLLGPVVESFSRVQEIYEPVTDGTKDQCYISKSVDATSHFETLTCDVRDIYKRMTGTDLVLKQRPKMEDQ.

Belongs to the Rab GDI family.

The polypeptide is Probable secretory pathway GDP dissociation inhibitor 1 (gdi1) (Schizosaccharomyces pombe (strain 972 / ATCC 24843) (Fission yeast)).